We begin with the raw amino-acid sequence, 469 residues long: 3-isopropylmalate dehydratase large subunit (469 aa).

[4Fe-4S] cluster-binding residues include C347, C408, and C411.

This sequence belongs to the aconitase/IPM isomerase family. LeuC type 1 subfamily. In terms of assembly, heterodimer of LeuC and LeuD. Requires [4Fe-4S] cluster as cofactor.

The enzyme catalyses (2R,3S)-3-isopropylmalate = (2S)-2-isopropylmalate. It participates in amino-acid biosynthesis; L-leucine biosynthesis; L-leucine from 3-methyl-2-oxobutanoate: step 2/4. Its function is as follows. Catalyzes the isomerization between 2-isopropylmalate and 3-isopropylmalate, via the formation of 2-isopropylmaleate. The protein is 3-isopropylmalate dehydratase large subunit of Actinobacillus succinogenes (strain ATCC 55618 / DSM 22257 / CCUG 43843 / 130Z).